Here is a 95-residue protein sequence, read N- to C-terminus: Defensin-like protein 232 (95 aa).

A signal peptide spans 1-26 (MRCTTLIMVSFVVSCLLLSLVEESEA). 4 disulfides stabilise this stretch: cysteine 33/cysteine 94, cysteine 43/cysteine 68, cysteine 51/cysteine 84, and cysteine 66/cysteine 86.

Belongs to the DEFL family. In terms of tissue distribution, flower buds.

It localises to the secreted. This Arabidopsis thaliana (Mouse-ear cress) protein is Defensin-like protein 232 (SCRL23).